A 251-amino-acid polypeptide reads, in one-letter code: HTH-type transcriptional regulator UlaR (251 aa).

An HTH deoR-type domain is found at 3-58 (EAQRHQILLEMLAQLGFVTVEKVVERLGISPATARRDINKLDESGKLKKVRNGAEA). Positions 20-39 (VTVEKVVERLGISPATARRD) form a DNA-binding region, H-T-H motif.

It localises to the cytoplasm. Functionally, represses ulaG and the ulaABCDEF operon. This is HTH-type transcriptional regulator UlaR from Shigella dysenteriae serotype 1 (strain Sd197).